We begin with the raw amino-acid sequence, 460 residues long: tRNA modification GTPase MnmE (460 aa).

(6S)-5-formyl-5,6,7,8-tetrahydrofolate-binding residues include R29, E91, and K132. A TrmE-type G domain is found at 227–383 (GISIALIGKT…LIDTIIKKCG (157 aa)). N237 is a K(+) binding site. Residues 237–242 (NVGKSS), 256–262 (TNIPGTT), and 281–284 (DTAG) contribute to the GTP site. S241 contributes to the Mg(2+) binding site. Positions 256, 258, and 261 each coordinate K(+). Mg(2+) is bound at residue T262. Residue K460 participates in (6S)-5-formyl-5,6,7,8-tetrahydrofolate binding.

It belongs to the TRAFAC class TrmE-Era-EngA-EngB-Septin-like GTPase superfamily. TrmE GTPase family. Homodimer. Heterotetramer of two MnmE and two MnmG subunits. It depends on K(+) as a cofactor.

Its subcellular location is the cytoplasm. Exhibits a very high intrinsic GTPase hydrolysis rate. Involved in the addition of a carboxymethylaminomethyl (cmnm) group at the wobble position (U34) of certain tRNAs, forming tRNA-cmnm(5)s(2)U34. In Prochlorococcus marinus (strain AS9601), this protein is tRNA modification GTPase MnmE.